The sequence spans 281 residues: Cell growth regulator with EF hand domain protein 1 (281 aa).

The signal sequence occupies residues 1-21 (MFQWLMQALMLPLLLLPLGRA). EF-hand domains lie at 71 to 106 (DREQ…ALAP) and 115 to 150 (PVIL…PKHT). Ca(2+) is bound by residues Asp-84, Asp-86, Asn-88, Gln-90, Glu-95, Asp-128, Asp-130, Asp-132, and Glu-139. The interval 148-281 (KHTESLPPAL…HSIQLENDEI (134 aa)) is disordered. Positions 168 to 183 (LLANSPLQSETQQSLG) are enriched in polar residues. The segment covering 184-213 (TKEEIRGQVEAKRASLEPEQEAGHQTEGKV) has biased composition (basic and acidic residues). Phosphoserine is present on residues Ser-217 and Ser-228. Over residues 237 to 256 (EGAEEQVEIKDNEGEAKELL) the composition is skewed to basic and acidic residues.

Post-translationally, probably digested extracellularly by an unknown serine protease generating extremely hydrophobic bioactive peptides.

Its subcellular location is the secreted. Functionally, mediates cell-cell adhesion in a calcium-dependent manner. Able to inhibit growth in several cell lines. In Mus musculus (Mouse), this protein is Cell growth regulator with EF hand domain protein 1.